Consider the following 306-residue polypeptide: Oligopeptide transport system permease protein OppB (306 aa).

Over 1-8 (MLKFIFKR) the chain is Cytoplasmic. The chain crosses the membrane as a helical span at residues 9–29 (LLEALPTLFILITFSFFLMRL). Topologically, residues 30-99 (APGSPFTSER…IASAFPVSIK (70 aa)) are periplasmic. Residues 94 to 293 (FPVSIKLGMV…TLTILFNAIV (200 aa)) form the ABC transmembrane type-1 domain. A helical transmembrane segment spans residues 100–120 (LGMVAFAFAVVLGVTAGTLAA). Residues 121 to 135 (LNQNSRWDYILMSFS) are Cytoplasmic-facing. A helical transmembrane segment spans residues 136–156 (MLGVIMPSFVFAPVLVLIFAI). Residues 157–169 (YLGWLPAGGWNGG) lie on the Periplasmic side of the membrane. The chain crosses the membrane as a helical span at residues 170–190 (TAMYMILPVASLTIAYVAGIA). At 191 to 229 (RIMRGSMIEVLHSNFIRTAKAKGLSMSRIILKHALRPAL) the chain is on the cytoplasmic side. The chain crosses the membrane as a helical span at residues 230-250 (LPVITYLGPAFVGIITGSMVI). At 251-279 (ESVFGLPGMGLLFVNGALNRDYSLVLSLT) the chain is on the periplasmic side. The chain crosses the membrane as a helical span at residues 280–300 (ILVGTLTILFNAIVDILYAII). Residues 301 to 306 (DPKIRY) are Cytoplasmic-facing.

It belongs to the binding-protein-dependent transport system permease family. OppBC subfamily. As to quaternary structure, the complex is composed of two ATP-binding proteins (OppD and OppF), two transmembrane proteins (OppB and OppC) and a solute-binding protein (OppA).

The protein resides in the cell inner membrane. In terms of biological role, part of the ABC transporter complex OppABCDF involved in the uptake of oligopeptides. Probably responsible for the translocation of the substrate across the membrane. In Haemophilus influenzae (strain ATCC 51907 / DSM 11121 / KW20 / Rd), this protein is Oligopeptide transport system permease protein OppB (oppB).